Here is a 213-residue protein sequence, read N- to C-terminus: High frequency lysogenization protein HflD homolog (213 aa).

The stretch at 79 to 122 (QGLNAELTRYTLSLMVLERKLSSAKGALNTLGDRINGLQRQLDH) forms a coiled coil.

This sequence belongs to the HflD family.

It localises to the cytoplasm. Its subcellular location is the cell inner membrane. This chain is High frequency lysogenization protein HflD homolog, found in Salmonella typhi.